Reading from the N-terminus, the 335-residue chain is Galactosylgalactosylxylosylprotein 3-beta-glucuronosyltransferase 3 (335 aa).

Residues 1–7 lie on the Cytoplasmic side of the membrane; that stretch reads MKLKLKN. The chain crosses the membrane as a helical; Signal-anchor for type II membrane protein span at residues 8 to 28; that stretch reads VFLAYFLVSIAGLLYALVQLG. Residues 29–335 are Lumenal-facing; that stretch reads QPCDCLPPLR…GQGSDPAIEV (307 aa). Asp-196 is a binding site for Mn(2+). Catalysis depends on Glu-281, which acts as the Proton acceptor. Asn-300 carries an N-linked (GlcNAc...) asparagine glycan. Over residues 312 to 322 the composition is skewed to basic and acidic residues; it reads EKPKMKQEEQL. Residues 312-335 form a disordered region; the sequence is EKPKMKQEEQLQRQGQGSDPAIEV.

Belongs to the glycosyltransferase 43 family. As to quaternary structure, homodimer; disulfide-linked. Interacts with PXYLP1; the interaction increases the 2-phosphoxylose phosphatase activity of PXYLP1 during completion of linkage region formation in a B3GAT3-mediated manner. The cofactor is Mn(2+). N-glycosylated. In terms of tissue distribution, liver, brain and heart. Moderate expression seen in lung, skeletal muscle, kidney and testis.

Its subcellular location is the golgi apparatus membrane. It is found in the golgi apparatus. It localises to the cis-Golgi network. It catalyses the reaction 3-O-(beta-D-galactosyl-(1-&gt;3)-beta-D-galactosyl-(1-&gt;4)-beta-D-xylosyl)-L-seryl-[protein] + UDP-alpha-D-glucuronate = 3-O-(beta-D-GlcA-(1-&gt;3)-beta-D-Gal-(1-&gt;3)-beta-D-Gal-(1-&gt;4)-beta-D-Xyl)-L-seryl-[protein] + UDP + H(+). It functions in the pathway protein modification; protein glycosylation. In terms of biological role, glycosaminoglycans biosynthesis. Involved in forming the linkage tetrasaccharide present in heparan sulfate and chondroitin sulfate. Transfers a glucuronic acid moiety from the uridine diphosphate-glucuronic acid (UDP-GlcUA) to the common linkage region trisaccharide Gal-beta-1,3-Gal-beta-1,4-Xyl covalently bound to a Ser residue at the glycosaminylglycan attachment site of proteoglycans. Can also play a role in the biosynthesis of l2/HNK-1 carbohydrate epitope on glycoproteins. Highest activity seen with Gal-beta-1,3-Gal-beta-O-R (where R=naphthalenemethanol or benzyl alcohol). Stimulates 2-phosphoxylose phosphatase activity of PXYLP1 in presence of uridine diphosphate-glucuronic acid (UDP-GlcUA) during completion of linkage region formation. The protein is Galactosylgalactosylxylosylprotein 3-beta-glucuronosyltransferase 3 (B3GAT3) of Cricetulus griseus (Chinese hamster).